Here is a 194-residue protein sequence, read N- to C-terminus: Fibroblast growth factor 7 (194 aa).

The first 31 residues, 1 to 31 (MRKWILTWILPSLLYRSCFHIICLVGTISLA), serve as a signal peptide directing secretion. An N-linked (GlcNAc...) asparagine glycan is attached at Asn45.

This sequence belongs to the heparin-binding growth factors family. Interacts with FGFBP1. Interacts with FGFR2. Affinity between fibroblast growth factors (FGFs) and their receptors is increased by heparan sulfate glycosaminoglycans that function as coreceptors.

The protein resides in the secreted. In terms of biological role, plays an important role in the regulation of embryonic development, cell proliferation and cell differentiation. Required for normal branching morphogenesis. Growth factor active on keratinocytes. Possible major paracrine effector of normal epithelial cell proliferation. The sequence is that of Fibroblast growth factor 7 (FGF7) from Cervus elaphus (Red deer).